Here is a 612-residue protein sequence, read N- to C-terminus: Baculoviral IAP repeat-containing protein 2 (612 aa).

One copy of the BIR 1 repeat lies at 46-113 (ELYRMSTYSA…RQFYPSCSFV (68 aa)). The residue at position 143 (Arg143) is an Omega-N-methylarginine. A Phosphoserine modification is found at Ser153. 2 BIR repeats span residues 177-243 (EEAR…CPFL) and 262-329 (HSAR…CEFL). Zn(2+) is bound by residues Cys299, Cys302, His319, and Cys326. The CARD domain occupies 447–537 (MASGDLSLIR…TLYENLFVEK (91 aa)). An RING-type zinc finger spans residues 565–600 (CKVCMDREVSIVFIPCGHLVVCQECAPSLRKCPICR).

It belongs to the IAP family. Interacts with DIABLO/SMAC and with PRSS25; these interactions inhibit apoptotic suppressor activity. Interacts with CASP9. Interacts (via BIR domains) with TRAF2; the interaction is required for IKBKE ubiquitination. Interacts with E2F1, RIPK1, RIPK2, RIPK3, RIPK4, BIRC5/survivin and USP19. Interacts with HSP90AB1. Interacts with several death receptors, inclusing FAS, TNFRSF10A and TNFRSF10B. Recruited to TNFRSF10B in the absence of receptor stimulation. When TNFRSF10B is stimulated, further recruited to the receptor and cleaved by caspases. Proteolytic fragments remain associated with TNFRSF10B. Post-translationally, auto-ubiquitinated and degraded by the proteasome in apoptotic cells. In terms of processing, upon stimulation of death receptors, including TNFRSF10B, recruited to receptors and cleaved by caspases. Proteolytic fragments remain associated with the receptors. This cleavage presumably inactivates the protein. As to expression, expressed in heart, brain, spleen, lung, liver, skeletal muscle, kidney and testis.

Its subcellular location is the cytoplasm. The protein localises to the nucleus. The catalysed reaction is S-ubiquitinyl-[E2 ubiquitin-conjugating enzyme]-L-cysteine + [acceptor protein]-L-lysine = [E2 ubiquitin-conjugating enzyme]-L-cysteine + N(6)-ubiquitinyl-[acceptor protein]-L-lysine.. The CARD domain inhibits the activation of E3 ubiquitin ligase activity by preventing RING domain dimerization and E2 ubiquitin donor binding and activation. The CARD domain-mediated autoinhibition of the E3 ubiquitin-protein ligase activity suppresses cell proliferation and migration. USP19 regulates the stability of BIRC2/c-IAP1 by preventing its ubiquitination. Functionally, multi-functional protein which regulates not only caspases and apoptosis, but also modulates inflammatory signaling and immunity, mitogenic kinase signaling, and cell proliferation, as well as cell invasion and metastasis. Acts as an E3 ubiquitin-protein ligase regulating NF-kappa-B signaling and regulates both canonical and non-canonical NF-kappa-B signaling by acting in opposite directions: acts as a positive regulator of the canonical pathway and suppresses constitutive activation of non-canonical NF-kappa-B signaling. The target proteins for its E3 ubiquitin-protein ligase activity include: RIPK1, RIPK2, RIPK3, RIPK4, CASP3, CASP7, CASP8, TRAF2, DIABLO/SMAC, MAP3K14/NIK, MAP3K5/ASK1, IKBKG/NEMO, IKBKE and MXD1/MAD1. Can also function as an E3 ubiquitin-protein ligase of the NEDD8 conjugation pathway, targeting effector caspases for neddylation and inactivation. Acts as an important regulator of innate immune signaling via regulation of Toll-like receptors (TLRs), Nodlike receptors (NLRs) and RIG-I like receptors (RLRs), collectively referred to as pattern recognition receptors (PRRs). Protects cells from spontaneous formation of the ripoptosome, a large multi-protein complex that has the capability to kill cancer cells in a caspase-dependent and caspase-independent manner. Suppresses ripoptosome formation by ubiquitinating RIPK1 and CASP8. Can stimulate the transcriptional activity of E2F1. Plays a role in the modulation of the cell cycle. The polypeptide is Baculoviral IAP repeat-containing protein 2 (Birc2) (Mus musculus (Mouse)).